We begin with the raw amino-acid sequence, 48 residues long: Large ribosomal subunit protein bL32 (48 aa).

The segment covering 1–20 (MAVPKRRVSKTRAAKRRTHY) has biased composition (basic residues). The disordered stretch occupies residues 1–48 (MAVPKRRVSKTRAAKRRTHYKVSLPMPVKDKDGSYKMPHRANPTTKEY).

The protein belongs to the bacterial ribosomal protein bL32 family.

The sequence is that of Large ribosomal subunit protein bL32 from Campylobacter jejuni subsp. doylei (strain ATCC BAA-1458 / RM4099 / 269.97).